We begin with the raw amino-acid sequence, 222 residues long: Niacin transporter NiaX (222 aa).

5 helical membrane passes run 34-54, 72-94, 101-120, 135-155, and 167-187; these read NLII…MMPV, MAAM…LGFM, TIWL…AYVL, IFNF…VYAF, and ALLN…MIDF.

This sequence belongs to the vitamin uptake transporter (VUT/ECF) (TC 2.A.88) family. In L.lactis forms a stable complex with EcfA, EcfA' and EcfT. In E.coli forms a stable energy-coupling factor (ECF) transporter complex composed of 2 membrane-embedded substrate-binding proteins (S component), 2 ATP-binding proteins (A and A' components) and 2 transmembrane proteins (T component), probably with a stoichiometry of 2:1:1:2. May be able to interact with more than 1 S component at a time.

Its subcellular location is the cell membrane. In terms of biological role, probably a niacin-binding protein that interacts with the energy-coupling factor (ECF) ABC-transporter complex. Unlike classic ABC transporters this ECF transporter provides the energy necessary to transport a number of different substrates. The substrates themselves are bound by transmembrane, not extracytoplasmic soluble proteins. Uptake of niacin into proteosomes containing EcfA1A2T and Niax has been demonstrated. Uptake requires hydrolyzable Mg-ATP and is substrate-specific; NiaX-containing proteosomes did not transport riboflavin. The polypeptide is Niacin transporter NiaX (niaX) (Lactococcus lactis subsp. cremoris (strain MG1363)).